A 345-amino-acid chain; its full sequence is Phenylalanine--tRNA ligase alpha subunit (345 aa).

Glu-266 provides a ligand contact to Mg(2+).

Belongs to the class-II aminoacyl-tRNA synthetase family. Phe-tRNA synthetase alpha subunit type 1 subfamily. Tetramer of two alpha and two beta subunits. Requires Mg(2+) as cofactor.

The protein resides in the cytoplasm. It carries out the reaction tRNA(Phe) + L-phenylalanine + ATP = L-phenylalanyl-tRNA(Phe) + AMP + diphosphate + H(+). The polypeptide is Phenylalanine--tRNA ligase alpha subunit (Burkholderia lata (strain ATCC 17760 / DSM 23089 / LMG 22485 / NCIMB 9086 / R18194 / 383)).